The following is a 90-amino-acid chain: MNLDDIINSMMPEVYQRLSTAVELGKWPDGVALTEEQKENCLQLVMLWQARHNIEAQHMTIDTNGQMVMKSKQQLKEDFGISAKPIAMFK.

This is an uncharacterized protein from Escherichia coli (strain K12).